The chain runs to 213 residues: Protein HSH49 (213 aa).

RRM domains lie at 9-88 (NTVY…QVTN) and 108-185 (AKLF…YAFK).

Interacts with RDS3.

It localises to the nucleus. Its function is as follows. Possible SF3b-like factor. This is Protein HSH49 (HSH49) from Saccharomyces cerevisiae (strain ATCC 204508 / S288c) (Baker's yeast).